The chain runs to 411 residues: MMVIPVSFKFKTMDDIEVTGKTVLVRVDINSPVDPNDGTILDDTRMRLHAETIRELSDRGARTVVMAHQSRPGKNDFTTLEQHARALSGILRRPVKYVEDIFGSAARENISGLGDGEIILLENVRFYSEEVLKRDPEEQAETHLVRKLAPLLDYFINDAFAAAHRSQPSLVGFALRVPSAAGRVMERELRTLQGALENVERPCVYVLGGVKVDDSIMVMKNVLENGSADLVLTTGLVANIFLAGCGVKIGKVNMDFIKSRGYCDFIKVAKKLKKRFPERIVVPVDVAVCRDGKRVDVPVKKIPNHPIQDIGMETIKLYARRIREARTLFANGPAGVFENPDFSIGTEDILNAISSSEGFSIIGGGHLAAAAVKMGFEDSINHISSGGGASISLLAGEELPAVRVLEESRHP.

Residues 28–30, arginine 45, 68–71, arginine 125, and arginine 165 contribute to the substrate site; these read DIN and HQSR. ATP is bound by residues glutamate 338 and 364-367; that span reads GGHL.

It belongs to the phosphoglycerate kinase family. As to quaternary structure, homodimer.

Its subcellular location is the cytoplasm. It catalyses the reaction (2R)-3-phosphoglycerate + ATP = (2R)-3-phospho-glyceroyl phosphate + ADP. Its pathway is carbohydrate degradation; glycolysis; pyruvate from D-glyceraldehyde 3-phosphate: step 2/5. The polypeptide is Phosphoglycerate kinase (pgk) (Methanothermobacter thermautotrophicus (strain ATCC 29096 / DSM 1053 / JCM 10044 / NBRC 100330 / Delta H) (Methanobacterium thermoautotrophicum)).